The primary structure comprises 51 residues: Insulin (51 aa).

Intrachain disulfides connect Cys-7/Cys-37, Cys-19/Cys-50, and Cys-36/Cys-41.

The protein belongs to the insulin family. Heterodimer of a B chain and an A chain linked by two disulfide bonds.

Its subcellular location is the secreted. Functionally, insulin decreases blood glucose concentration. It increases cell permeability to monosaccharides, amino acids and fatty acids. It accelerates glycolysis, the pentose phosphate cycle, and glycogen synthesis in liver. The chain is Insulin (INS) from Acomys cahirinus (Cairo spiny mouse).